Here is a 140-residue protein sequence, read N- to C-terminus: MKERTFVALKPDAVKRKLIGKIIERFENKGFEIVAMKMIKLDREMAEKYYEEHKGKEFYERLINFMTSGRMIVMVVEGENAISVVRKMIGKTNPAEAEPGTIRGDFALTTPDNIIHASDSKESAEREIKLFFKEDEIFDK.

Residues Lys10, Phe58, Arg86, Thr92, Arg103, and Asn113 each coordinate ATP. His116 acts as the Pros-phosphohistidine intermediate in catalysis.

Belongs to the NDK family. In terms of assembly, homohexamer. Mg(2+) is required as a cofactor.

The protein resides in the cytoplasm. The enzyme catalyses a 2'-deoxyribonucleoside 5'-diphosphate + ATP = a 2'-deoxyribonucleoside 5'-triphosphate + ADP. It carries out the reaction a ribonucleoside 5'-diphosphate + ATP = a ribonucleoside 5'-triphosphate + ADP. In terms of biological role, major role in the synthesis of nucleoside triphosphates other than ATP. The ATP gamma phosphate is transferred to the NDP beta phosphate via a ping-pong mechanism, using a phosphorylated active-site intermediate. The sequence is that of Nucleoside diphosphate kinase from Methanocaldococcus jannaschii (strain ATCC 43067 / DSM 2661 / JAL-1 / JCM 10045 / NBRC 100440) (Methanococcus jannaschii).